We begin with the raw amino-acid sequence, 652 residues long: Inactive leucine-rich repeat receptor-like serine/threonine-protein kinase At1g60630 (652 aa).

A signal peptide spans 1 to 23 (MISSSSCMFFLVFAFFLISPVRS). Over 24 to 256 (SDVEALLSLK…SRTKLIGIIS (233 aa)) the chain is Extracellular. LRR repeat units lie at residues 64-84 (SKLVLENLNLSGSLNGKSLNQ), 85-108 (LDQLRVLSFKGNSLSGSIPNLSGL), 109-132 (VNLKSLYLNDNNFSGEFPESLTSL), 134-156 (RLKTVVLSRNRFSGKIPSSLLRL), 158-178 (RLYTFYVQDNLFSGSIPPLNQ), and 179-203 (ATLRFFNVSNNQLSGHIPPTQALNR). N-linked (GlcNAc...) asparagine glycans are attached at residues asparagine 72, asparagine 104, and asparagine 120. N-linked (GlcNAc...) asparagine glycosylation is found at asparagine 185, asparagine 205, and asparagine 225. Residues 257–277 (GSICGGILILLLTFLLICLLW) form a helical membrane-spanning segment. Topologically, residues 278 to 652 (RRKRSKSKRE…SLPREDHMSI (375 aa)) are cytoplasmic. Positions 286–321 (REERRSKRVAESKEAKTAETEEGTSDQKNKRFSWEK) are disordered. Residues 350 to 624 (KASAETLGRG…VKDARAEAAL (275 aa)) form the Protein kinase domain. Serine 352 is subject to Phosphoserine. Residues 356–364 (LGRGTLGST) and lysine 378 each bind ATP. Phosphoserine is present on residues serine 430 and serine 433. Threonine 509 carries the phosphothreonine modification. The disordered stretch occupies residues 630 to 652 (SDHSPGRWSDTIQSLPREDHMSI).

This sequence belongs to the protein kinase superfamily. Ser/Thr protein kinase family.

Its subcellular location is the cell membrane. The chain is Inactive leucine-rich repeat receptor-like serine/threonine-protein kinase At1g60630 from Arabidopsis thaliana (Mouse-ear cress).